The primary structure comprises 186 residues: Elongation factor P (186 aa).

It belongs to the elongation factor P family.

Its subcellular location is the cytoplasm. Its pathway is protein biosynthesis; polypeptide chain elongation. In terms of biological role, involved in peptide bond synthesis. Stimulates efficient translation and peptide-bond synthesis on native or reconstituted 70S ribosomes in vitro. Probably functions indirectly by altering the affinity of the ribosome for aminoacyl-tRNA, thus increasing their reactivity as acceptors for peptidyl transferase. The chain is Elongation factor P from Polynucleobacter necessarius subsp. necessarius (strain STIR1).